The primary structure comprises 148 residues: Nucleoside diphosphate kinase 1 (148 aa).

ATP contacts are provided by Lys-9, Phe-57, Arg-85, Thr-91, Arg-102, and Asn-112. The active-site Pros-phosphohistidine intermediate is the His-115.

This sequence belongs to the NDK family. The cofactor is Mg(2+).

It catalyses the reaction a 2'-deoxyribonucleoside 5'-diphosphate + ATP = a 2'-deoxyribonucleoside 5'-triphosphate + ADP. The catalysed reaction is a ribonucleoside 5'-diphosphate + ATP = a ribonucleoside 5'-triphosphate + ADP. Major role in the synthesis of nucleoside triphosphates other than ATP. The ATP gamma phosphate is transferred to the NDP beta phosphate via a ping-pong mechanism, using a phosphorylated active-site intermediate. This chain is Nucleoside diphosphate kinase 1 (NDKP1), found in Mesembryanthemum crystallinum (Common ice plant).